Consider the following 365-residue polypeptide: Hematopoietic SH2 domain-containing protein homolog (365 aa).

One can recognise an SH2 domain in the interval 34–125 (WFHGIISRKA…PYNELLTVAC (92 aa)). Disordered stretches follow at residues 199 to 278 (QSTD…QQKP) and 335 to 365 (AEHP…APGY). Positions 257–277 (QQITPNTPNEGRTQQKNQQQK) are enriched in polar residues.

In terms of biological role, may be an adapter protein involved in tyrosine kinase signaling. The sequence is that of Hematopoietic SH2 domain-containing protein homolog (hsh2d) from Danio rerio (Zebrafish).